Here is a 156-residue protein sequence, read N- to C-terminus: Putative HTH-type transcriptional regulator YffB (156 aa).

The region spanning 2 to 137 (KLSSGWEQSV…SNVSLAQVAD (136 aa)) is the HTH rrf2-type domain.

The protein is Putative HTH-type transcriptional regulator YffB (yffB) of Lactococcus lactis subsp. lactis (strain IL1403) (Streptococcus lactis).